A 453-amino-acid chain; its full sequence is MAVVKLSPWANYSSSKSEIKSSSSSSSSKSSLSAYVINVSSSPRLSFYNPYPRRLHHQRLSSPASIRCSVTSSDQIQAPLPAKQKPECFGVFCLTYDLKAEEETKSWKKIINVAVSGAAGMISNHLLFKLASGEVFGPDQPISLKLLGSERSFAALEGVAMELEDSLYPLLRQVSIGIDPYEIFQDAEWALLIGAKPRGPGMERADLLDINGQIFAEQGKALNAVASPNVKVMVVGNPCNTNALICLKNAPNIPPKNFHALTRLDENRAKCQLALKAGVFYDKVSNVTIWGNHSTTQVPDFLNAKIHGIPVTEVIRDRKWLEDEFTNMVQTRGGVLIKKWGRSSAASTAVSIVDAIRSLVTPTPEGDWFSTGVYTNGNPYGIAEDIVFSMPCRSKGDGDYEFVKDVIFDDYLSKKIKKSEDELLAEKKCVAHLTGEGIAVCDLPEDTMLPGEM.

The transit peptide at 1–68 directs the protein to the chloroplast; the sequence is MAVVKLSPWA…RLSSPASIRC (68 aa). A disulfide bond links cysteine 88 and cysteine 93. 117 to 123 provides a ligand contact to NADP(+); the sequence is GAAGMIS. Substrate contacts are provided by arginine 198 and arginine 204. NADP(+) contacts are provided by residues asparagine 211, glutamine 218, and 235–237; that span reads VGN. Substrate-binding residues include asparagine 237 and arginine 268. The active-site Proton acceptor is histidine 293. Residues cysteine 429 and cysteine 441 are joined by a disulfide bond.

This sequence belongs to the LDH/MDH superfamily. MDH type 2 family. In terms of assembly, homodimer.

It localises to the plastid. The protein resides in the chloroplast. The catalysed reaction is (S)-malate + NADP(+) = oxaloacetate + NADPH + H(+). Chloroplast NADP-MDH is activated upon illumination. In order to be enzymatically active, disulfide bridges on the protein must be reduced by thioredoxin which receives electrons from ferredoxin and the electron transport system of photosynthesis. Its function is as follows. The chloroplastic, NADP-dependent form is essential for the photosynthesis C4 cycle, which allows plants to circumvent the problem of photorespiration. In C4 plants, NADP-MDH activity acts to convert oxaloacetate to malate in chloroplasts of mesophyll cells for transport to the bundle sheath cells. This Flaveria bidentis (Coastal plain yellowtops) protein is Malate dehydrogenase [NADP], chloroplastic.